A 626-amino-acid chain; its full sequence is UvrABC system protein C (626 aa).

Residues 25-104 (TSPGVYRFSN…IKELKPRYNV (80 aa)) enclose the GIY-YIG domain. A UVR domain is found at 218–253 (SALLRDLSAEMQKKAKELKFEEAAALKAQIEGLKRY).

It belongs to the UvrC family. As to quaternary structure, interacts with UvrB in an incision complex.

It is found in the cytoplasm. Its function is as follows. The UvrABC repair system catalyzes the recognition and processing of DNA lesions. UvrC both incises the 5' and 3' sides of the lesion. The N-terminal half is responsible for the 3' incision and the C-terminal half is responsible for the 5' incision. The protein is UvrABC system protein C of Chlorobaculum tepidum (strain ATCC 49652 / DSM 12025 / NBRC 103806 / TLS) (Chlorobium tepidum).